We begin with the raw amino-acid sequence, 390 residues long: L-serine phosphate decarboxylase Cj1436c (390 aa).

The residue at position 243 (lysine 243) is an N6-(pyridoxal phosphate)lysine.

It belongs to the class-I pyridoxal-phosphate-dependent aminotransferase family. The cofactor is pyridoxal 5'-phosphate.

It catalyses the reaction O-phospho-L-serine + H(+) = phosphoethanolamine + CO2. The protein operates within capsule biogenesis; capsule polysaccharide biosynthesis. In terms of biological role, pyridoxal phosphate (PLP)-dependent decarboxylase involved in the biosynthesis of amidated D-glucuronic acid structures found on the capsular polysaccharide (CPS) of C.jejuni. Catalyzes the decarboxylation of L-serine phosphate to ethanolamine phosphate. Less active with L-threonine phosphate. No activity with L-serine, L-threonine, L-aspartate or L-glutamate. The polypeptide is L-serine phosphate decarboxylase Cj1436c (Campylobacter jejuni subsp. jejuni serotype O:2 (strain ATCC 700819 / NCTC 11168)).